A 514-amino-acid chain; its full sequence is Endoglucanase MaCel5A (514 aa).

Positions 1 to 23 (MKRILFTAGGCLFYLLLAVKAYA) are cleaved as a signal peptide. 2 stretches are compositionally biased toward low complexity: residues 91–114 (GSSSSSSSSSSSSSGSSSSSSGSG) and 179–201 (SSSSSSGGTSSSGSSSSGVSSSG). 2 disordered regions span residues 91 to 118 (GSSSSSSSSSSSSSGSSSSSSGSGSSSG) and 179 to 208 (SSSSSSGGTSSSGSSSSGVSSSGGSSGGDS). Residue Glu346 is the Proton donor of the active site. Glu439 serves as the catalytic Nucleophile.

It belongs to the glycosyl hydrolase 5 (cellulase A) family.

The catalysed reaction is Endohydrolysis of (1-&gt;4)-beta-D-glucosidic linkages in cellulose, lichenin and cereal beta-D-glucans.. With respect to regulation, exhibits strong halostability and halotolerance. The activity increases about tenfold in the presence of 0.5 M NaCl, and about fivefold in the presence of 4.0 M NaCl. Tolerates detergents, but activity is decreased in the presence of EDTA. Activity is enhanced in the presence of Mn(2+), Ca(2+), Ba(2+) or Mg(2+), and decreased in the presence of Zn(2+), Cu(2+), Al(3+) or Fe(3+). Functionally, endoglucanase that exhibits highest activity toward barley beta-glucan, lower activity toward carboxymethyl cellulose (CMC-Na), and marginal activity toward laminarin and xylan. In Microbulbifer sp. (strain ALW1), this protein is Endoglucanase MaCel5A.